The sequence spans 880 residues: Calcium-transporting ATPase lmo0841 (880 aa).

4 helical membrane passes run 47–67 (LWKLFLETFKDPMVIVLVIAA), 68–88 (LVQLVLGEVVESLIIFLVLIV), 243–263 (LGLGILALCVLIFAVEAGRVL), and 271–291 (MATAILNAFMFAVAVAVAAIP). Ca(2+) is bound by residues Val-287, Ala-288, Ile-290, and Glu-292. The active-site 4-aspartylphosphate intermediate is Asp-334. 5 helical membrane-spanning segments follow: residues 681–701 (IAYLFAGNLGAIIAILFALVL), 707–727 (FTALQLLFINLVNDSLPAIAL), 756–776 (AVISRGVLIGIAVIISQYIGM), 819–839 (YVIGAVLLCFVLYGITVLPGA), and 854–874 (WSIAAGLALAAVVMMEIIKVV). Asn-716 and Asp-720 together coordinate Ca(2+).

The protein belongs to the cation transport ATPase (P-type) (TC 3.A.3) family. Type IIA subfamily.

The protein localises to the cell membrane. The catalysed reaction is Ca(2+)(in) + ATP + H2O = Ca(2+)(out) + ADP + phosphate + H(+). Phosphorylation is inhibited by EGTA and vanadate. ATPase activity is stimulated by Sr(2+). Inhibited by very high concentrations of cyclopiazonic acid (CPA). Catalyzes the hydrolysis of ATP coupled with the transport of calcium. The transport is electrogenic with a probable ATP:Ca(2+):H(+) stoichiometry of 1:1:1. May have an important role in survival of the bacterium when stressed by a combination of a high calcium concentration and alkaline pH. This Listeria monocytogenes serovar 1/2a (strain ATCC BAA-679 / EGD-e) protein is Calcium-transporting ATPase lmo0841.